The sequence spans 349 residues: Methylthioribose-1-phosphate isomerase (349 aa).

Substrate contacts are provided by residues 49 to 51, arginine 92, and glutamine 199; that span reads RGA. Aspartate 240 (proton donor) is an active-site residue. 250 to 251 is a binding site for substrate; it reads NK.

The protein belongs to the eIF-2B alpha/beta/delta subunits family. MtnA subfamily.

It carries out the reaction 5-(methylsulfanyl)-alpha-D-ribose 1-phosphate = 5-(methylsulfanyl)-D-ribulose 1-phosphate. It functions in the pathway amino-acid biosynthesis; L-methionine biosynthesis via salvage pathway; L-methionine from S-methyl-5-thio-alpha-D-ribose 1-phosphate: step 1/6. In terms of biological role, catalyzes the interconversion of methylthioribose-1-phosphate (MTR-1-P) into methylthioribulose-1-phosphate (MTRu-1-P). This Syntrophobacter fumaroxidans (strain DSM 10017 / MPOB) protein is Methylthioribose-1-phosphate isomerase.